A 268-amino-acid polypeptide reads, in one-letter code: MTEAGPAQAGPFRYTLAMHPIQVIERGREDYQPCFDAMRAFTAARTPETPDQVWLVEHPPVYTLGQAGDPAHLLAPDDRIPVVQIDRGGQITYHGPGQVVAYLLLDLRRRRLMVRELVHGIEQAVLDTLAAYNLAAERKPGAPGIYLSDGPHQGAKIAALGLKIRNGCSYHGVSLNVQMDLSPFLRINPCGYAGLETVDMASAGATFAAADANGAPLPVTAAQQPEIALRLAAALCEVLAAHEARALAAEGTAAPAEAKQPGETALAS.

The 197-residue stretch at 47-243 (PETPDQVWLV…ALCEVLAAHE (197 aa)) folds into the BPL/LPL catalytic domain. Residues 87 to 94 (RGGQITYH), 159 to 161 (ALG), and 172 to 174 (GVS) each bind substrate. The active-site Acyl-thioester intermediate is the Cys190.

The protein belongs to the LipB family.

It is found in the cytoplasm. The enzyme catalyses octanoyl-[ACP] + L-lysyl-[protein] = N(6)-octanoyl-L-lysyl-[protein] + holo-[ACP] + H(+). The protein operates within protein modification; protein lipoylation via endogenous pathway; protein N(6)-(lipoyl)lysine from octanoyl-[acyl-carrier-protein]: step 1/2. Functionally, catalyzes the transfer of endogenously produced octanoic acid from octanoyl-acyl-carrier-protein onto the lipoyl domains of lipoate-dependent enzymes. Lipoyl-ACP can also act as a substrate although octanoyl-ACP is likely to be the physiological substrate. This is Octanoyltransferase from Cupriavidus necator (strain ATCC 17699 / DSM 428 / KCTC 22496 / NCIMB 10442 / H16 / Stanier 337) (Ralstonia eutropha).